Reading from the N-terminus, the 416-residue chain is uncharacterized protein (416 aa).

The next 9 helical transmembrane spans lie at leucine 5–leucine 25, isoleucine 84–valine 104, alanine 128–isoleucine 148, leucine 160–tryptophan 180, valine 192–phenylalanine 212, proline 237–leucine 257, phenylalanine 263–leucine 283, leucine 288–threonine 308, and isoleucine 312–isoleucine 332.

This sequence belongs to the glycosyltransferase 83 family.

The protein localises to the cell membrane. This is an uncharacterized protein from Aquifex aeolicus (strain VF5).